The sequence spans 463 residues: Arginine biosynthesis bifunctional protein ArgJ, chloroplastic (463 aa).

Substrate is bound by residues T207, K233, T244, E331, N458, and T463. T244 functions as the Nucleophile in the catalytic mechanism.

It belongs to the ArgJ family. As to quaternary structure, heterodimer of an alpha and a beta chain.

It localises to the plastid. It is found in the chloroplast. The catalysed reaction is N(2)-acetyl-L-ornithine + L-glutamate = N-acetyl-L-glutamate + L-ornithine. The enzyme catalyses L-glutamate + acetyl-CoA = N-acetyl-L-glutamate + CoA + H(+). Its pathway is amino-acid biosynthesis; L-arginine biosynthesis; L-ornithine and N-acetyl-L-glutamate from L-glutamate and N(2)-acetyl-L-ornithine (cyclic): step 1/1. It participates in amino-acid biosynthesis; L-arginine biosynthesis; N(2)-acetyl-L-ornithine from L-glutamate: step 1/4. Catalyzes two activities which are involved in the cyclic version of arginine biosynthesis: the synthesis of acetylglutamate from glutamate and acetyl-CoA, and of ornithine by transacetylation between acetylornithine and glutamate. In Oryza sativa subsp. japonica (Rice), this protein is Arginine biosynthesis bifunctional protein ArgJ, chloroplastic.